The primary structure comprises 357 residues: 4-hydroxymandelate oxidase (357 aa).

The FMN hydroxy acid dehydrogenase domain occupies 1 to 357 (MTYVSLADLE…RRLNTKLGVV (357 aa)). Position 126 (Gln-126) interacts with FMN. Tyr-128 lines the a 2-oxocarboxylate pocket. Thr-154 provides a ligand contact to FMN. Position 163 (Arg-163) interacts with a 2-oxocarboxylate. Residue Lys-228 participates in FMN binding. Residue His-252 is the Proton acceptor of the active site. An a 2-oxocarboxylate-binding site is contributed by Arg-255. Residues 283 to 287 (DGGIR) and 306 to 307 (GR) contribute to the FMN site.

The protein belongs to the FMN-dependent alpha-hydroxy acid dehydrogenase family. FMN is required as a cofactor.

The catalysed reaction is (S)-4-hydroxymandelate + O2 = 4-hydroxyphenylglyoxylate + H2O2. It participates in antibiotic biosynthesis; vancomycin biosynthesis. Its function is as follows. Catalyzes the oxidation of p-hydroxymandelate to p-hydroxybenzoylformate in the biosynthesis of L-(4-hydroxyphenyl)glycine and L-(3,5-dihydroxyphenyl)glycine, 2 non-proteinogenic amino acids occurring in the vancomycin group of antibiotics. This Amycolatopsis orientalis (Nocardia orientalis) protein is 4-hydroxymandelate oxidase (hmo).